Here is a 366-residue protein sequence, read N- to C-terminus: Box C/D snoRNA protein 1 (366 aa).

C5, C8, C17, C20, C25, C29, H33, and C39 together coordinate Zn(2+). An HIT-type zinc finger spans residues C5–C39. The tract at residues D318–A366 is disordered. Acidic residues-rich tracts occupy residues R321 to P332 and D343 to Y355. At S330 the chain carries Phosphoserine.

The protein belongs to the BCD1 family.

Its subcellular location is the nucleus. Required for box C/D snoRNAs accumulation involved in snoRNA processing, snoRNA transport to the nucleolus and ribosome biogenesis. This chain is Box C/D snoRNA protein 1 (BCD1), found in Saccharomyces cerevisiae (strain ATCC 204508 / S288c) (Baker's yeast).